A 769-amino-acid polypeptide reads, in one-letter code: Calcium up-regulated protein F (769 aa).

The segment at 1 to 21 (MINIKDISKSSNQSEEKSLKG) is disordered. 2 consecutive Ricin B-type lectin domains span residues 25–145 (KTKY…WTTF) and 116–249 (QGNG…WGIN).

This sequence belongs to the cup family.

The protein localises to the cytoplasm. It is found in the membrane. May play an important role in stabilizing and/or regulating the cell membrane during Ca(2+) stress or certain stages of development. The polypeptide is Calcium up-regulated protein F (cupF) (Dictyostelium discoideum (Social amoeba)).